A 600-amino-acid chain; its full sequence is DNA mismatch repair protein MutL (600 aa).

The disordered stretch occupies residues 348–375; sequence QPQAQRPQTAWSAETSPFRPYQPTTGFS. Residues 349-362 are compositionally biased toward polar residues; the sequence is PQAQRPQTAWSAET.

Belongs to the DNA mismatch repair MutL/HexB family.

Functionally, this protein is involved in the repair of mismatches in DNA. It is required for dam-dependent methyl-directed DNA mismatch repair. May act as a 'molecular matchmaker', a protein that promotes the formation of a stable complex between two or more DNA-binding proteins in an ATP-dependent manner without itself being part of a final effector complex. This Rhizobium leguminosarum bv. trifolii (strain WSM2304) protein is DNA mismatch repair protein MutL.